We begin with the raw amino-acid sequence, 326 residues long: ATPase GET3 (326 aa).

32–39 contributes to the ATP binding site; the sequence is KGGVGKTT. Aspartate 61 is a catalytic residue. The ATP site is built by glutamate 244 and asparagine 271. Cysteine 282 and cysteine 285 together coordinate Zn(2+).

The protein belongs to the arsA ATPase family. As to quaternary structure, homodimer.

The protein resides in the cytoplasm. The protein localises to the endoplasmic reticulum. Its function is as follows. ATPase required for the post-translational delivery of tail-anchored (TA) proteins to the endoplasmic reticulum. Recognizes and selectively binds the transmembrane domain of TA proteins in the cytosol. This complex then targets to the endoplasmic reticulum by membrane-bound receptors, where the tail-anchored protein is released for insertion. This process is regulated by ATP binding and hydrolysis. ATP binding drives the homodimer towards the closed dimer state, facilitating recognition of newly synthesized TA membrane proteins. ATP hydrolysis is required for insertion. Subsequently, the homodimer reverts towards the open dimer state, lowering its affinity for the membrane-bound receptor, and returning it to the cytosol to initiate a new round of targeting. This is ATPase GET3 from Phaeosphaeria nodorum (strain SN15 / ATCC MYA-4574 / FGSC 10173) (Glume blotch fungus).